Reading from the N-terminus, the 200-residue chain is Dephospho-CoA kinase (200 aa).

In terms of domain architecture, DPCK spans 3–200 (VIGLTGGIGS…KKYMTLAQGS (198 aa)). 11–16 (GSGKTS) contacts ATP.

This sequence belongs to the CoaE family.

It localises to the cytoplasm. It carries out the reaction 3'-dephospho-CoA + ATP = ADP + CoA + H(+). The protein operates within cofactor biosynthesis; coenzyme A biosynthesis; CoA from (R)-pantothenate: step 5/5. Catalyzes the phosphorylation of the 3'-hydroxyl group of dephosphocoenzyme A to form coenzyme A. This Nitrosospira multiformis (strain ATCC 25196 / NCIMB 11849 / C 71) protein is Dephospho-CoA kinase.